The chain runs to 612 residues: DNA mismatch repair protein MutL (612 aa).

It belongs to the DNA mismatch repair MutL/HexB family.

This protein is involved in the repair of mismatches in DNA. It is required for dam-dependent methyl-directed DNA mismatch repair. May act as a 'molecular matchmaker', a protein that promotes the formation of a stable complex between two or more DNA-binding proteins in an ATP-dependent manner without itself being part of a final effector complex. In Afipia carboxidovorans (strain ATCC 49405 / DSM 1227 / KCTC 32145 / OM5) (Oligotropha carboxidovorans), this protein is DNA mismatch repair protein MutL.